A 425-amino-acid chain; its full sequence is Serine--tRNA ligase (425 aa).

228–230 provides a ligand contact to L-serine; that stretch reads TAE. Residue 259-261 coordinates ATP; it reads RSE. An L-serine-binding site is contributed by E282. An ATP-binding site is contributed by 346-349; that stretch reads EIAS. S382 is a binding site for L-serine.

Belongs to the class-II aminoacyl-tRNA synthetase family. Type-1 seryl-tRNA synthetase subfamily. Homodimer. The tRNA molecule binds across the dimer.

Its subcellular location is the cytoplasm. The catalysed reaction is tRNA(Ser) + L-serine + ATP = L-seryl-tRNA(Ser) + AMP + diphosphate + H(+). The enzyme catalyses tRNA(Sec) + L-serine + ATP = L-seryl-tRNA(Sec) + AMP + diphosphate + H(+). The protein operates within aminoacyl-tRNA biosynthesis; selenocysteinyl-tRNA(Sec) biosynthesis; L-seryl-tRNA(Sec) from L-serine and tRNA(Sec): step 1/1. In terms of biological role, catalyzes the attachment of serine to tRNA(Ser). Is also able to aminoacylate tRNA(Sec) with serine, to form the misacylated tRNA L-seryl-tRNA(Sec), which will be further converted into selenocysteinyl-tRNA(Sec). This Rickettsia prowazekii (strain Madrid E) protein is Serine--tRNA ligase.